The chain runs to 262 residues: Cutinase 2 (262 aa).

Tyr-61 contacts poly(ethylene terephthalate). Ser-131 acts as the Nucleophile in catalysis. Met-132 and Trp-156 together coordinate poly(ethylene terephthalate). Residues Asp-177 and His-209 each act as charge relay system in the active site. Cys-242 and Cys-260 are joined by a disulfide.

The protein belongs to the AB hydrolase superfamily.

Its subcellular location is the secreted. It is found in the periplasm. The catalysed reaction is a butanoate ester + H2O = an aliphatic alcohol + butanoate + H(+). The enzyme catalyses an acetyl ester + H2O = an aliphatic alcohol + acetate + H(+). It catalyses the reaction (ethylene terephthalate)(n) + H2O = (ethylene terephthalate)(n-1) + 4-[(2-hydroxyethoxy)carbonyl]benzoate + H(+). It carries out the reaction cutin + H2O = cutin monomers.. Catalyzes the hydrolysis of cutin, a polyester that forms the structure of plant cuticle. Shows esterase activity towards p-nitrophenol-linked aliphatic esters (pNP-aliphatic esters). Capable of degrading the plastic poly(ethylene terephthalate) (PET), the most abundant polyester plastic in the world. Capable of degrading the bioplastic poly(lactic acid) (PLLA). The protein is Cutinase 2 of Thermobifida cellulosilytica.